The sequence spans 382 residues: Ribonuclease D (382 aa).

A 3'-5' exonuclease domain is found at 4 to 169; sequence ITTTAELASV…DVFAALDADL (166 aa). The region spanning 208–289 is the HRDC domain; the sequence is KPKDLAVMME…QRGLARDPRE (82 aa).

Belongs to the RNase D family. It depends on a divalent metal cation as a cofactor.

The protein localises to the cytoplasm. It catalyses the reaction Exonucleolytic cleavage that removes extra residues from the 3'-terminus of tRNA to produce 5'-mononucleotides.. In terms of biological role, exonuclease involved in the 3' processing of various precursor tRNAs. Initiates hydrolysis at the 3'-terminus of an RNA molecule and releases 5'-mononucleotides. The protein is Ribonuclease D of Nitrobacter hamburgensis (strain DSM 10229 / NCIMB 13809 / X14).